A 285-amino-acid polypeptide reads, in one-letter code: Transcription initiation factor IIE subunit beta (285 aa).

Composition is skewed to polar residues over residues 1 to 10 (MSSLSDQLSS) and 33 to 44 (TPTAYLNSNDGH). Positions 1-56 (MSSLSDQLSSFKKKVANQPIYAKPQPRQPASPTPTAYLNSNDGHSSAASSPGSYSL) are disordered. The span at 45 to 55 (SSAASSPGSYS) shows a compositional bias: low complexity. Positions 67 to 142 (YSQPADSGVG…FTFKPLHNIR (76 aa)) form a DNA-binding region, TFIIE beta. The interval 240–272 (PTSVDPSTVKRAGHNQTPKQKKPKTRRGKITNT) is disordered. A compositionally biased stretch (basic residues) spans 258–268 (KQKKPKTRRGK).

It belongs to the TFIIE beta subunit family. As to quaternary structure, TFIIE is a tetramer of two alpha (tfa1) and two beta (tfa2) subunits. TFIIE associates with RNA polymerase II via the beta subunit.

It localises to the nucleus. Recruits TFIIH to the initiation complex and stimulates the RNA polymerase II C-terminal domain kinase and DNA-dependent ATPase activities of TFIIH. Both TFIIH and TFIIE are required for promoter clearance by RNA polymerase. The chain is Transcription initiation factor IIE subunit beta (tfa2) from Schizosaccharomyces pombe (strain 972 / ATCC 24843) (Fission yeast).